Reading from the N-terminus, the 177-residue chain is 3-hydroxydecanoyl-[acyl-carrier-protein] dehydratase (177 aa).

Residue H71 is part of the active site.

Belongs to the thioester dehydratase family. FabA subfamily. Homodimer.

The protein localises to the cytoplasm. The enzyme catalyses a (3R)-hydroxyacyl-[ACP] = a (2E)-enoyl-[ACP] + H2O. It carries out the reaction (3R)-hydroxydecanoyl-[ACP] = (2E)-decenoyl-[ACP] + H2O. The catalysed reaction is (2E)-decenoyl-[ACP] = (3Z)-decenoyl-[ACP]. Its pathway is lipid metabolism; fatty acid biosynthesis. Its function is as follows. Necessary for the introduction of cis unsaturation into fatty acids. Catalyzes the dehydration of (3R)-3-hydroxydecanoyl-ACP to E-(2)-decenoyl-ACP and then its isomerization to Z-(3)-decenoyl-ACP. Can catalyze the dehydratase reaction for beta-hydroxyacyl-ACPs with saturated chain lengths up to 16:0, being most active on intermediate chain length. The protein is 3-hydroxydecanoyl-[acyl-carrier-protein] dehydratase of Wigglesworthia glossinidia brevipalpis.